Consider the following 205-residue polypeptide: Holliday junction branch migration complex subunit RuvA (205 aa).

The interval 1-64 (MIGKLTGLVD…EDAIRLFGFP (64 aa)) is domain I. Positions 65 to 143 (SEVERDWFRL…ALGPVDSLTA (79 aa)) are domain II. The flexible linker stretch occupies residues 144 to 153 (KLTIAEAEGT). Positions 153-205 (TAPVAAQDAITALVNLGYGRPQAAAAVATSLEALGETAPLADLIRRGLKELAR) are domain III.

This sequence belongs to the RuvA family. In terms of assembly, homotetramer. Forms an RuvA(8)-RuvB(12)-Holliday junction (HJ) complex. HJ DNA is sandwiched between 2 RuvA tetramers; dsDNA enters through RuvA and exits via RuvB. An RuvB hexamer assembles on each DNA strand where it exits the tetramer. Each RuvB hexamer is contacted by two RuvA subunits (via domain III) on 2 adjacent RuvB subunits; this complex drives branch migration. In the full resolvosome a probable DNA-RuvA(4)-RuvB(12)-RuvC(2) complex forms which resolves the HJ.

The protein localises to the cytoplasm. Functionally, the RuvA-RuvB-RuvC complex processes Holliday junction (HJ) DNA during genetic recombination and DNA repair, while the RuvA-RuvB complex plays an important role in the rescue of blocked DNA replication forks via replication fork reversal (RFR). RuvA specifically binds to HJ cruciform DNA, conferring on it an open structure. The RuvB hexamer acts as an ATP-dependent pump, pulling dsDNA into and through the RuvAB complex. HJ branch migration allows RuvC to scan DNA until it finds its consensus sequence, where it cleaves and resolves the cruciform DNA. This chain is Holliday junction branch migration complex subunit RuvA, found in Beijerinckia indica subsp. indica (strain ATCC 9039 / DSM 1715 / NCIMB 8712).